Consider the following 405-residue polypeptide: MQNNSFLARLVRGNLVLQILAGILLGAAMATFSPEYAQKVGLIGNLFVGALKAVAPVLVFILVASSIANQKKNQHTYMRPIVVLYLFGTFSAALTAVILSFLFPTTLVLATGAEGATPPQGIAEVLNTLLFKLVDNPVSALMNANYIGILAWGVGLGLALHHSSSTTKAVFEDLSHGISQIVRFIIRLAPFGIFGLVASTFATTGFDALAGYAQLLAVLLGAMAFIALVVNPMIVYYKIRRNPFPLVLQCLRESGVTAFFTRSSAANIPVNMALCEKLKLDEDTYSVSIPLGATINMAGAAITITVLTLAAVHTMGIEVDLMTALLLSVVAAVSACGASGVAGGSLLLIPLACGLFGISNDIAMQVVAVGFIIGVIQDSAETALNSSTDVLFTAAVCQAEHEKRA.

9 helical membrane passes run 13–33 (GNLVLQILAGILLGAAMATFS), 43–63 (IGNLFVGALKAVAPVLVFILV), 81–101 (IVVLYLFGTFSAALTAVILSF), 140–160 (ALMNANYIGILAWGVGLGLAL), 191–211 (FGIFGLVASTFATTGFDALAG), 215–235 (LLAVLLGAMAFIALVVNPMIV), 297–317 (MAGAAITITVLTLAAVHTMGI), 338–358 (ASGVAGGSLLLIPLACGLFGI), and 362–382 (IAMQVVAVGFIIGVIQDSAET).

Belongs to the dicarboxylate/amino acid:cation symporter (DAACS) (TC 2.A.23) family.

The protein localises to the cell inner membrane. It catalyses the reaction L-serine(in) + Na(+)(in) = L-serine(out) + Na(+)(out). It carries out the reaction L-threonine(in) + Na(+)(in) = L-threonine(out) + Na(+)(out). Functionally, involved in the import of serine and threonine into the cell, with the concomitant import of sodium (symport system). The polypeptide is Serine/threonine transporter SstT (Vibrio cholerae serotype O1 (strain ATCC 39315 / El Tor Inaba N16961)).